The chain runs to 348 residues: NADH-quinone oxidoreductase subunit H (348 aa).

Helical transmembrane passes span 21–41 (IAGI…VIYV), 87–107 (GIFL…WAVI), 120–140 (VGLL…VMAG), 166–186 (IGFI…SEIV), 195–215 (GIVN…LFFI), 258–278 (NILL…LPPI), 288–308 (GFLW…WIWA), and 325–345 (VFLP…MATG).

It belongs to the complex I subunit 1 family. NDH-1 is composed of 14 different subunits. Subunits NuoA, H, J, K, L, M, N constitute the membrane sector of the complex.

It localises to the cell inner membrane. It catalyses the reaction a quinone + NADH + 5 H(+)(in) = a quinol + NAD(+) + 4 H(+)(out). In terms of biological role, NDH-1 shuttles electrons from NADH, via FMN and iron-sulfur (Fe-S) centers, to quinones in the respiratory chain. The immediate electron acceptor for the enzyme in this species is believed to be ubiquinone. Couples the redox reaction to proton translocation (for every two electrons transferred, four hydrogen ions are translocated across the cytoplasmic membrane), and thus conserves the redox energy in a proton gradient. This subunit may bind ubiquinone. The chain is NADH-quinone oxidoreductase subunit H from Erythrobacter litoralis (strain HTCC2594).